A 218-amino-acid polypeptide reads, in one-letter code: uncharacterized protein (218 aa).

The disordered stretch occupies residues 1–24; sequence MAAQPQAPSAGGRPRAGKAVKSVA. Residues 28 to 88 enclose the HTH tetR-type domain; it reads KLSRESIVEG…AVRIRVIDDI (61 aa). The H-T-H motif DNA-binding region spans 51 to 70; it reads TINALATQLGTKGPSLYNHV. A Phosphothreonine; by PknH modification is found at T57.

In terms of processing, phosphorylated on Thr-57 by PknH.

This is an uncharacterized protein from Mycobacterium tuberculosis (strain ATCC 25618 / H37Rv).